The following is a 243-amino-acid chain: Aquaporin SIP1-2 (243 aa).

Helical transmembrane passes span 9-29 and 45-65; these read AAAADAVVTFLWVLCVSTLGA and FALLVTVSLLSVLLFVFNILC. An NPA 1 motif is present at residues 74 to 76; that stretch reads NPT. 3 consecutive transmembrane segments (helical) span residues 98–118, 136–156, and 163–183; these read LPAQAAGAVGGALAISELMPA, GAGAELVLTFVITLAVLLIIV, and IIKTWMISICTLCLVLSGAAY. The NPA 2 signature appears at 189–191; it reads NPA. A helical transmembrane segment spans residues 211–231; that stretch reads VYWICPFIGAILAAWIFRAMF.

Belongs to the MIP/aquaporin (TC 1.A.8) family. SIP (TC 1.A.8.10) subfamily.

Its subcellular location is the membrane. Aquaporins facilitate the transport of water and small neutral solutes across cell membranes. The protein is Aquaporin SIP1-2 (SIP1-2) of Zea mays (Maize).